Reading from the N-terminus, the 101-residue chain is Large ribosomal subunit protein uL23 (101 aa).

It belongs to the universal ribosomal protein uL23 family. As to quaternary structure, part of the 50S ribosomal subunit. Contacts protein L29, and trigger factor when it is bound to the ribosome.

One of the early assembly proteins it binds 23S rRNA. One of the proteins that surrounds the polypeptide exit tunnel on the outside of the ribosome. Forms the main docking site for trigger factor binding to the ribosome. The polypeptide is Large ribosomal subunit protein uL23 (Synechocystis sp. (strain ATCC 27184 / PCC 6803 / Kazusa)).